The chain runs to 862 residues: Chaperone protein ClpB 1 (862 aa).

The 143-residue stretch at 5–147 (AEQFTEQAWA…KEAITAVRGN (143 aa)) folds into the Clp R domain. 2 repeat regions span residues 8 to 72 (FTEQ…LQRL) and 84 to 147 (LGRS…VRGN). The segment at 160–341 (ESLAKYGRDL…RRFQQVLVDQ (182 aa)) is NBD1. Residue 207–214 (GEPGVGKT) participates in ATP binding. The tract at residues 342-550 (PTVPDTISIL…IAEVIAKWTG (209 aa)) is linker. Positions 392 to 526 (IDLVDESAAR…QEDLLEDEDG (135 aa)) form a coiled coil. The NBD2 stretch occupies residues 560–771 (EMEKLLQLED…RLDDQIIFRS (212 aa)). 610–617 (GPTGVGKT) is an ATP binding site. The C-terminal stretch occupies residues 772-862 (LEKEELRRIV…DAGDDKLSIS (91 aa)).

The protein belongs to the ClpA/ClpB family. In terms of assembly, homohexamer. The oligomerization is ATP-dependent.

It localises to the cytoplasm. Part of a stress-induced multi-chaperone system, it is involved in the recovery of the cell from heat-induced damage, in cooperation with DnaK, DnaJ and GrpE. Acts before DnaK, in the processing of protein aggregates. Protein binding stimulates the ATPase activity; ATP hydrolysis unfolds the denatured protein aggregates, which probably helps expose new hydrophobic binding sites on the surface of ClpB-bound aggregates, contributing to the solubilization and refolding of denatured protein aggregates by DnaK. This Parasynechococcus marenigrum (strain WH8102) protein is Chaperone protein ClpB 1 (clpB1).